A 379-amino-acid polypeptide reads, in one-letter code: Putative beta-glucosidase 6 (379 aa).

The N-terminal stretch at 1–20 (MEKTFALITIFLAFAFSGKC) is a signal peptide. A beta-D-glucoside contacts are provided by residues Gln43, His141, and 186-187 (NE). Catalysis depends on Glu187, which acts as the Proton donor. Cysteines 206 and 213 form a disulfide. An N-linked (GlcNAc...) asparagine glycan is attached at Asn217. Tyr329 contacts a beta-D-glucoside. N-linked (GlcNAc...) asparagine glycosylation is present at Asn362.

Belongs to the glycosyl hydrolase 1 family.

The catalysed reaction is Hydrolysis of terminal, non-reducing beta-D-glucosyl residues with release of beta-D-glucose.. The chain is Putative beta-glucosidase 6 from Arabidopsis thaliana (Mouse-ear cress).